We begin with the raw amino-acid sequence, 143 residues long: Ribonuclease H (143 aa).

Residues 1–136 (MQEIEIFCDG…CDSLAKLEAQ (136 aa)) form the RNase H type-1 domain. Residues Asp-9, Glu-47, Asp-69, and Asp-128 each contribute to the Mg(2+) site.

It belongs to the RNase H family. In terms of assembly, monomer. The cofactor is Mg(2+).

The protein localises to the cytoplasm. It catalyses the reaction Endonucleolytic cleavage to 5'-phosphomonoester.. In terms of biological role, endonuclease that specifically degrades the RNA of RNA-DNA hybrids. In Helicobacter pylori (strain HPAG1), this protein is Ribonuclease H.